We begin with the raw amino-acid sequence, 277 residues long: Large ribosomal subunit protein uL2 (277 aa).

The interval 212 to 277 (RWRGKRPHVR…KFIVRGRKSK (66 aa)) is disordered. Over residues 254–277 (TAGKKTRDKKKASTKFIVRGRKSK) the composition is skewed to basic residues.

The protein belongs to the universal ribosomal protein uL2 family. In terms of assembly, part of the 50S ribosomal subunit. Forms a bridge to the 30S subunit in the 70S ribosome.

Its function is as follows. One of the primary rRNA binding proteins. Required for association of the 30S and 50S subunits to form the 70S ribosome, for tRNA binding and peptide bond formation. It has been suggested to have peptidyltransferase activity; this is somewhat controversial. Makes several contacts with the 16S rRNA in the 70S ribosome. The chain is Large ribosomal subunit protein uL2 from Leuconostoc citreum (strain KM20).